Here is a 145-residue protein sequence, read N- to C-terminus: Salt stress-induced protein (145 aa).

The region spanning 3–145 is the Jacalin-type lectin domain; the sequence is LVKIGLWGGN…IDAIGIYVHP (143 aa). 2 repeat units span residues 6-15 and 54-64. The interval 6–64 is 2 X approximate repeats, Gly-rich; that stretch reads IGLWGGNGGSAQDISVPPKKLLGVTIYSSDAIRSIAFNYIGVDGQEYAIGPWGGGEGTS.

In terms of tissue distribution, sheaths and roots from mature plants and seedlings.

The polypeptide is Salt stress-induced protein (SALT) (Oryza sativa subsp. indica (Rice)).